Consider the following 393-residue polypeptide: Pyrimidine monooxygenase RutA (393 aa).

FMN is bound by residues 79–80 (IK), Asn-145, Glu-154, 170–171 (RY), and Ser-220.

Belongs to the NtaA/SnaA/DszA monooxygenase family. RutA subfamily.

The catalysed reaction is uracil + FMNH2 + NADH + O2 = (Z)-3-ureidoacrylate + FMN + NAD(+) + H2O + H(+). The enzyme catalyses thymine + FMNH2 + NADH + O2 = (Z)-2-methylureidoacrylate + FMN + NAD(+) + H2O + H(+). Catalyzes the pyrimidine ring opening between N-3 and C-4 by an unusual flavin hydroperoxide-catalyzed mechanism, adding oxygen atoms in the process to yield ureidoacrylate peracid, that immediately reacts with FMN forming ureidoacrylate and FMN-N(5)-oxide. The FMN-N(5)-oxide reacts spontaneously with NADH to produce FMN. Requires the flavin reductase RutF to regenerate FMN in vivo. In Escherichia coli O18:K1:H7 (strain IHE3034 / ExPEC), this protein is Pyrimidine monooxygenase RutA.